A 1169-amino-acid chain; its full sequence is Translation initiation factor IF-2 (1169 aa).

Disordered stretches follow at residues 69–108 (IKAKNENPKNNDNKNNKNFSNPSHPEKLSKEGLNKKPLLI) and 139–568 (ALSK…LRAA). Composition is skewed to basic and acidic residues over residues 71 to 83 (AKNENPKNNDNKN) and 92 to 102 (HPEKLSKEGLN). Polar residues predominate over residues 139–156 (ALSKNQNKTNTSVITTPN). Over residues 157 to 171 (LKDKKNPSALQDKKP) the composition is skewed to basic and acidic residues. Residues 196–214 (NLANSNRNINANKINNSVN) show a composition bias toward low complexity. Residues 231-248 (ADNNNFPKKNLNSPNVKS) are compositionally biased toward polar residues. The span at 265 to 281 (NTNRPNSNSRQPSSNTQ) shows a compositional bias: low complexity. Polar residues-rich tracts occupy residues 282–294 (ISANRPGGQNRQG), 412–432 (MQLQKTNASNKEKPNISNVNK), and 439–455 (NQKTKAPNSRLNTSPSP). The span at 472–486 (GRTDWDDSAKLEALR) shows a compositional bias: basic and acidic residues. The span at 544–560 (KQFKKKKKETTRQRQKR) shows a compositional bias: basic residues. One can recognise a tr-type G domain in the interval 661-838 (KRPPVITVMG…EVEDLQANPE (178 aa)). The tract at residues 670–677 (GHVDHGKT) is G1. A GTP-binding site is contributed by 670–677 (GHVDHGKT). The tract at residues 695–699 (GITQH) is G2. Residues 720–723 (DTPG) form a G3 region. GTP contacts are provided by residues 720–724 (DTPGH) and 774–777 (NKID). A G4 region spans residues 774–777 (NKID). The tract at residues 810 to 812 (SAI) is G5.

It belongs to the TRAFAC class translation factor GTPase superfamily. Classic translation factor GTPase family. IF-2 subfamily.

It localises to the cytoplasm. Functionally, one of the essential components for the initiation of protein synthesis. Protects formylmethionyl-tRNA from spontaneous hydrolysis and promotes its binding to the 30S ribosomal subunits. Also involved in the hydrolysis of GTP during the formation of the 70S ribosomal complex. The protein is Translation initiation factor IF-2 of Prochlorococcus marinus subsp. pastoris (strain CCMP1986 / NIES-2087 / MED4).